A 234-amino-acid polypeptide reads, in one-letter code: Large ribosomal subunit protein uL1 (234 aa).

This sequence belongs to the universal ribosomal protein uL1 family. Part of the 50S ribosomal subunit.

In terms of biological role, binds directly to 23S rRNA. The L1 stalk is quite mobile in the ribosome, and is involved in E site tRNA release. Functionally, protein L1 is also a translational repressor protein, it controls the translation of the L11 operon by binding to its mRNA. This is Large ribosomal subunit protein uL1 from Klebsiella pneumoniae subsp. pneumoniae (strain ATCC 700721 / MGH 78578).